Here is an 83-residue protein sequence, read N- to C-terminus: Small ribosomal subunit protein uS17 (83 aa).

It belongs to the universal ribosomal protein uS17 family. As to quaternary structure, part of the 30S ribosomal subunit.

One of the primary rRNA binding proteins, it binds specifically to the 5'-end of 16S ribosomal RNA. This Francisella tularensis subsp. tularensis (strain FSC 198) protein is Small ribosomal subunit protein uS17.